The chain runs to 83 residues: Disintegrin isoform D-2 (83 aa).

Positions 2 to 83 (PPVCGNELLE…GKSSDCPWNH (82 aa)) constitute a Disintegrin domain. 7 cysteine pairs are disulfide-bonded: cysteine 5/cysteine 24, cysteine 16/cysteine 34, cysteine 18/cysteine 29, cysteine 28/cysteine 51, cysteine 42/cysteine 48, cysteine 47/cysteine 72, and cysteine 60/cysteine 79. The Cell attachment site signature appears at 64–66 (RGD).

The protein belongs to the venom metalloproteinase (M12B) family. P-II subfamily. P-IIa sub-subfamily. As to quaternary structure, monomer (disintegrin). As to expression, expressed by the venom gland.

The protein resides in the secreted. In terms of biological role, inhibits fibrinogen interaction with platelets. Acts by binding to the alpha-IIb/beta-3 (ITGA2B/ITGB3) on the platelet surface and inhibits aggregation induced by ADP, thrombin, platelet-activating factor and collagen. This is Disintegrin isoform D-2 from Bitis arietans (African puff adder).